The sequence spans 360 residues: MTPFLRQQLSRQALRLAEIDAALADPKVCSQIGTLRSLNREHARVSALVDRWQRYEQREQDLAGAQELLDEPEMAELARAEIGAAQADLDRLDSELLTALMPRDADDDRNAFVEIRAGTGGEESALFAADLARMYLRHAERRGWKTELMSESVSDLGGYKDVVLHIIGDAVFEALKYESGGHRVQRVPATEAQGRIHTSACTVAVLAEADEAEEVSLNPAELRIDTYRASGAGGQHINKTDSAVRVTHLPTGLVAECQDDRSQHRNKARALAVLAARLRDRVRQEQAAKDAAARKSLIGSGDRSDRIRTYNFPQGRLTDHRINLTLYKLGAVLEGDLDEVIGALQAAHAAEQLAELETQA.

Position 235 is an N5-methylglutamine (Gln235).

The protein belongs to the prokaryotic/mitochondrial release factor family. In terms of processing, methylated by PrmC. Methylation increases the termination efficiency of RF1.

Its subcellular location is the cytoplasm. Peptide chain release factor 1 directs the termination of translation in response to the peptide chain termination codons UAG and UAA. The chain is Peptide chain release factor 1 from Leptothrix cholodnii (strain ATCC 51168 / LMG 8142 / SP-6) (Leptothrix discophora (strain SP-6)).